Reading from the N-terminus, the 405-residue chain is Cysteine desulfurase IscS (405 aa).

Residues 75–76, N156, Q184, and 204–206 contribute to the pyridoxal 5'-phosphate site; these read AT and SAH. K207 bears the N6-(pyridoxal phosphate)lysine mark. T244 lines the pyridoxal 5'-phosphate pocket. C329 functions as the Cysteine persulfide intermediate in the catalytic mechanism. Residue C329 coordinates [2Fe-2S] cluster.

This sequence belongs to the class-V pyridoxal-phosphate-dependent aminotransferase family. NifS/IscS subfamily. Homodimer. Forms a heterotetramer with IscU, interacts with other sulfur acceptors. Pyridoxal 5'-phosphate is required as a cofactor.

The protein resides in the cytoplasm. The enzyme catalyses (sulfur carrier)-H + L-cysteine = (sulfur carrier)-SH + L-alanine. It functions in the pathway cofactor biosynthesis; iron-sulfur cluster biosynthesis. Functionally, master enzyme that delivers sulfur to a number of partners involved in Fe-S cluster assembly, tRNA modification or cofactor biosynthesis. Catalyzes the removal of elemental sulfur atoms from cysteine to produce alanine. Functions as a sulfur delivery protein for Fe-S cluster synthesis onto IscU, an Fe-S scaffold assembly protein, as well as other S acceptor proteins. This Acinetobacter baumannii (strain SDF) protein is Cysteine desulfurase IscS.